Reading from the N-terminus, the 245-residue chain is MIIPAIDLIDGKVVRLYQGDYGQQTTFDLSPQAQLQSYQDQGANWLHIVDLTGAKEPAKRQTTLIAELTAGLSANIQVGGGIRTEEQVAELLSLGVKRVVIGSLAVKEPELVKGWFNKFGSEAICLALDININQSGEKIVAVSGWQSGGGKSLESIVEDFSQVGLKHALVTDISRDGTLTGANTELYRELSSRYPDIAWQASGGIATLEDVAAVRDSGAAGIIIGKALLINQFNVAEAIQCWPNE.

The active-site Proton acceptor is Asp-7. The Proton donor role is filled by Asp-129.

Belongs to the HisA/HisF family.

The protein localises to the cytoplasm. The enzyme catalyses 1-(5-phospho-beta-D-ribosyl)-5-[(5-phospho-beta-D-ribosylamino)methylideneamino]imidazole-4-carboxamide = 5-[(5-phospho-1-deoxy-D-ribulos-1-ylimino)methylamino]-1-(5-phospho-beta-D-ribosyl)imidazole-4-carboxamide. It functions in the pathway amino-acid biosynthesis; L-histidine biosynthesis; L-histidine from 5-phospho-alpha-D-ribose 1-diphosphate: step 4/9. The sequence is that of 1-(5-phosphoribosyl)-5-[(5-phosphoribosylamino)methylideneamino] imidazole-4-carboxamide isomerase from Shewanella sp. (strain MR-7).